Here is a 119-residue protein sequence, read N- to C-terminus: Large ribosomal subunit protein bL20 (119 aa).

The protein belongs to the bacterial ribosomal protein bL20 family.

Functionally, binds directly to 23S ribosomal RNA and is necessary for the in vitro assembly process of the 50S ribosomal subunit. It is not involved in the protein synthesizing functions of that subunit. This is Large ribosomal subunit protein bL20 from Neisseria gonorrhoeae (strain ATCC 700825 / FA 1090).